The sequence spans 1218 residues: Structural maintenance of chromosomes protein 2 (1218 aa).

32–39 (GLNGSGKS) lines the ATP pocket. The stretch at 209-517 (VKLKKEKEEY…INSVKIDYKI (309 aa)) forms a coiled coil. Positions 525-654 (DVLGQIYKLI…CSNVDLCKKI (130 aa)) constitute an SMC hinge domain. Coiled-coil stretches lie at residues 693-949 (LNYE…DTVK) and 978-1045 (RHDV…KKSE).

This sequence belongs to the SMC family. SMC2 subfamily.

Its subcellular location is the nucleus. Its function is as follows. May play a role in the conversion of interphase chromatin into condensed chromosomes. This chain is Structural maintenance of chromosomes protein 2, found in Plasmodium falciparum (isolate 3D7).